The primary structure comprises 377 residues: Erythronate-4-phosphate dehydrogenase (377 aa).

Positions 45 and 67 each coordinate substrate. NAD(+) is bound by residues 127-128 (QV), Asp-147, and Thr-176. Arg-209 is an active-site residue. Asp-233 is an NAD(+) binding site. Residue Glu-238 is part of the active site. The active-site Proton donor is His-255. Gly-258 serves as a coordination point for NAD(+). A substrate-binding site is contributed by Tyr-259.

The protein belongs to the D-isomer specific 2-hydroxyacid dehydrogenase family. PdxB subfamily. Homodimer.

It localises to the cytoplasm. The enzyme catalyses 4-phospho-D-erythronate + NAD(+) = (R)-3-hydroxy-2-oxo-4-phosphooxybutanoate + NADH + H(+). It participates in cofactor biosynthesis; pyridoxine 5'-phosphate biosynthesis; pyridoxine 5'-phosphate from D-erythrose 4-phosphate: step 2/5. Functionally, catalyzes the oxidation of erythronate-4-phosphate to 3-hydroxy-2-oxo-4-phosphonooxybutanoate. This chain is Erythronate-4-phosphate dehydrogenase, found in Vibrio atlanticus (strain LGP32) (Vibrio splendidus (strain Mel32)).